A 350-amino-acid chain; its full sequence is Protein RecA (350 aa).

Residue 67-74 (GPESSGKT) participates in ATP binding.

Belongs to the RecA family.

It localises to the cytoplasm. Can catalyze the hydrolysis of ATP in the presence of single-stranded DNA, the ATP-dependent uptake of single-stranded DNA by duplex DNA, and the ATP-dependent hybridization of homologous single-stranded DNAs. It interacts with LexA causing its activation and leading to its autocatalytic cleavage. The sequence is that of Protein RecA from Wolinella succinogenes (strain ATCC 29543 / DSM 1740 / CCUG 13145 / JCM 31913 / LMG 7466 / NCTC 11488 / FDC 602W) (Vibrio succinogenes).